The following is a 1377-amino-acid chain: ATP-dependent helicase/nuclease subunit A (1377 aa).

Residues 4 to 478 enclose the UvrD-like helicase ATP-binding domain; sequence TSWTPGQQKV…IDLSKNFRSR (475 aa). 25–32 provides a ligand contact to ATP; the sequence is AAAGSGKT. The UvrD-like helicase C-terminal domain maps to 526 to 867; sequence FLFSDTKTEL…RIMSIHKSKG (342 aa). A compositionally biased stretch (acidic residues) spans 1036 to 1065; it reads FEEESDEQSDEERSDEERSDGEQSDGEQSD. Residues 1036–1072 are disordered; it reads FEEESDEQSDEERSDEERSDGEQSDGEQSDGEQPRKD.

It belongs to the helicase family. AddA subfamily. In terms of assembly, heterodimer of AddA and AddB/RexB. It depends on Mg(2+) as a cofactor.

It carries out the reaction Couples ATP hydrolysis with the unwinding of duplex DNA by translocating in the 3'-5' direction.. It catalyses the reaction ATP + H2O = ADP + phosphate + H(+). Its function is as follows. The heterodimer acts as both an ATP-dependent DNA helicase and an ATP-dependent, dual-direction single-stranded exonuclease. Recognizes the chi site generating a DNA molecule suitable for the initiation of homologous recombination. The AddA nuclease domain is required for chi fragment generation; this subunit has the helicase and 3' -&gt; 5' nuclease activities. The polypeptide is ATP-dependent helicase/nuclease subunit A (Lachnoclostridium phytofermentans (strain ATCC 700394 / DSM 18823 / ISDg) (Clostridium phytofermentans)).